The following is a 396-amino-acid chain: 4-hydroxy-3-methylbut-2-en-1-yl diphosphate synthase (ferredoxin) (396 aa).

[4Fe-4S] cluster contacts are provided by Cys305, Cys308, Cys339, and Glu346.

It belongs to the IspG family. The cofactor is [4Fe-4S] cluster.

The enzyme catalyses (2E)-4-hydroxy-3-methylbut-2-enyl diphosphate + 2 oxidized [2Fe-2S]-[ferredoxin] + H2O = 2-C-methyl-D-erythritol 2,4-cyclic diphosphate + 2 reduced [2Fe-2S]-[ferredoxin] + H(+). The protein operates within isoprenoid biosynthesis; isopentenyl diphosphate biosynthesis via DXP pathway; isopentenyl diphosphate from 1-deoxy-D-xylulose 5-phosphate: step 5/6. In terms of biological role, converts 2C-methyl-D-erythritol 2,4-cyclodiphosphate (ME-2,4cPP) into 1-hydroxy-2-methyl-2-(E)-butenyl 4-diphosphate. This is 4-hydroxy-3-methylbut-2-en-1-yl diphosphate synthase (ferredoxin) from Gloeobacter violaceus (strain ATCC 29082 / PCC 7421).